Reading from the N-terminus, the 416-residue chain is Lipase (416 aa).

The first 28 residues, 1 to 28 (MKCCRIMFVLLGLWFVFGLSVPGGRTEA), serve as a signal peptide directing secretion. Catalysis depends on S141, which acts as the Nucleophile. G314 lines the Ca(2+) pocket. Catalysis depends on D345, which acts as the Charge relay system. D385 is a binding site for Ca(2+). H386 acts as the Charge relay system in catalysis. Ca(2+)-binding residues include E388, D393, and P394.

It belongs to the AB hydrolase superfamily. As to quaternary structure, homodimer.

It localises to the secreted. The catalysed reaction is a triacylglycerol + H2O = a diacylglycerol + a fatty acid + H(+). Its activity is regulated as follows. Activity is inhibited by zinc and iron ions, and activated in vitro in 25% v/v DMSO and acetone. Its function is as follows. Triacylglycerol hydrolase that shows hydrolysis preference towards some of the natural oils such as olive, sunflower and corn oils. The protein is Lipase of Bacillus sp.